The primary structure comprises 315 residues: Small ribosomal subunit protein mS45 (315 aa).

A mitochondrion-targeting transit peptide spans 1 to 66 (MRNSVEFSQL…SKYVACNSRS (66 aa)).

The protein belongs to the mitochondrion-specific ribosomal protein mS45 family. As to quaternary structure, component of the mitochondrial small ribosomal subunit (mt-SSU). Mature yeast 74S mitochondrial ribosomes consist of a small (37S) and a large (54S) subunit. The 37S small subunit contains a 15S ribosomal RNA (15S mt-rRNA) and at least 32 different proteins. The 54S large subunit contains a 21S rRNA (21S mt-rRNA) and at least 45 different proteins.

The protein resides in the mitochondrion. Component of the mitochondrial ribosome (mitoribosome), a dedicated translation machinery responsible for the synthesis of mitochondrial genome-encoded proteins, including at least some of the essential transmembrane subunits of the mitochondrial respiratory chain. The mitoribosomes are attached to the mitochondrial inner membrane and translation products are cotranslationally integrated into the membrane. Required for mitochondrial protein synthesis. Has a role in mitochondrial integrity and cell respiration. This chain is Small ribosomal subunit protein mS45 (bot1), found in Schizosaccharomyces pombe (strain 972 / ATCC 24843) (Fission yeast).